The chain runs to 250 residues: 3-deoxy-manno-octulosonate cytidylyltransferase (250 aa).

The protein belongs to the KdsB family.

Its subcellular location is the cytoplasm. The catalysed reaction is 3-deoxy-alpha-D-manno-oct-2-ulosonate + CTP = CMP-3-deoxy-beta-D-manno-octulosonate + diphosphate. It participates in nucleotide-sugar biosynthesis; CMP-3-deoxy-D-manno-octulosonate biosynthesis; CMP-3-deoxy-D-manno-octulosonate from 3-deoxy-D-manno-octulosonate and CTP: step 1/1. It functions in the pathway bacterial outer membrane biogenesis; lipopolysaccharide biosynthesis. In terms of biological role, activates KDO (a required 8-carbon sugar) for incorporation into bacterial lipopolysaccharide in Gram-negative bacteria. The chain is 3-deoxy-manno-octulosonate cytidylyltransferase from Rhodopirellula baltica (strain DSM 10527 / NCIMB 13988 / SH1).